Consider the following 69-residue polypeptide: Neuropeptide-like protein 30 (69 aa).

Residues 1 to 22 (MISTSSILILVVLLACFMAASA) form the signal peptide. A tyrosine amide mark is found at Tyr29, Tyr39, Tyr46, and Tyr53. Tryptophan amide is present on residues Trp58 and Trp67.

The protein belongs to the YARP (YGGW-amide related peptide) family. Expressed in hypoderm.

The protein localises to the secreted. May have antimicrobial activity. May play a role in response to fungal infection. In Caenorhabditis elegans, this protein is Neuropeptide-like protein 30 (nlp-30).